Reading from the N-terminus, the 185-residue chain is Ribosome-recycling factor (185 aa).

This sequence belongs to the RRF family.

It localises to the cytoplasm. Its function is as follows. Responsible for the release of ribosomes from messenger RNA at the termination of protein biosynthesis. May increase the efficiency of translation by recycling ribosomes from one round of translation to another. The sequence is that of Ribosome-recycling factor from Thermomicrobium roseum (strain ATCC 27502 / DSM 5159 / P-2).